The primary structure comprises 65 residues: Small ribosomal subunit protein bS21B (65 aa).

It belongs to the bacterial ribosomal protein bS21 family.

The protein is Small ribosomal subunit protein bS21B of Geobacter sulfurreducens (strain ATCC 51573 / DSM 12127 / PCA).